A 210-amino-acid chain; its full sequence is Thymidylate kinase (210 aa).

Gly-10–Thr-17 contributes to the ATP binding site.

This sequence belongs to the thymidylate kinase family.

The catalysed reaction is dTMP + ATP = dTDP + ADP. Phosphorylation of dTMP to form dTDP in both de novo and salvage pathways of dTTP synthesis. In Prochlorococcus marinus (strain MIT 9515), this protein is Thymidylate kinase.